The following is a 142-amino-acid chain: Coactosin-like protein (142 aa).

A2 is subject to N-acetylalanine. Residues 2–130 (ATKIDKEACR…EEDFIRSELK (129 aa)) enclose the ADF-H domain. Residues 66 to 75 (TGDAMSKRSK) are flexible and important for F-actin binding. The residue at position 102 (K102) is an N6-acetyllysine. S141 bears the Phosphoserine mark.

The protein belongs to the actin-binding proteins ADF family. Coactosin subfamily. In terms of assembly, interacts with 5-lipoxygenase (ALOX5/5LO) in a calcium-independent manner. Binds to F-actin with a stoichiometry of 1:2.

It localises to the cytoplasm. It is found in the cytoskeleton. The protein localises to the nucleus. In terms of biological role, binds to F-actin in a calcium-independent manner. Has no direct effect on actin depolymerization. Acts as a chaperone for ALOX5 (5LO), influencing both its stability and activity in leukotrienes synthesis. The protein is Coactosin-like protein (Cotl1) of Mus musculus (Mouse).